The following is a 304-amino-acid chain: Chromo domain-containing protein cec-1 (304 aa).

The Chromo domain maps to 8–66; that stretch reads YTVESILEHRKKKGKSEFYIKWLGYDHTHNSWEPKENIVDPTLIEAFFTREAARKAEIK. The span at 63-73 shows a compositional bias: basic and acidic residues; it reads AEIKAKKDKMA. 2 disordered regions span residues 63–235 and 248–304; these read AEIK…EIQL and VEPA…AIIE. A compositionally biased stretch (low complexity) spans 75 to 102; sequence GKKGASSKASASVSKASASTPARGAKAA. Positions 106–116 are enriched in basic residues; the sequence is PPKKSPPKRQR. A compositionally biased stretch (basic and acidic residues) spans 122–141; sequence IRPDSDTDEEHSSADKKSKA. Acidic residues-rich tracts occupy residues 142-152, 163-204, and 212-233; these read EDEEEVEDDEE, EEPE…DVQL, and EEEE…EEEI. Positions 248-292 are enriched in low complexity; the sequence is VEPAVATPEPSEPSSSEKAVVENGSSSAAAGNSASKPEVSAVEVV. Residues 293-304 show a composition bias toward acidic residues; sequence TVEDDDDIAIIE.

Its subcellular location is the nucleus. It is found in the chromosome. The sequence is that of Chromo domain-containing protein cec-1 (cec-1) from Caenorhabditis elegans.